A 397-amino-acid polypeptide reads, in one-letter code: Argininosuccinate synthase (397 aa).

7–15 (LYSGGLDTS) is a binding site for ATP. Position 83 (Tyr-83) interacts with L-citrulline. Position 113 (Gly-113) interacts with ATP. L-aspartate-binding residues include Thr-115, Asn-119, and Asp-120. Residue Asn-119 coordinates L-citrulline. Residues Arg-123, Ser-169, Ser-178, Glu-253, and Tyr-265 each contribute to the L-citrulline site.

Belongs to the argininosuccinate synthase family. Type 1 subfamily. In terms of assembly, homotetramer.

It is found in the cytoplasm. The enzyme catalyses L-citrulline + L-aspartate + ATP = 2-(N(omega)-L-arginino)succinate + AMP + diphosphate + H(+). The protein operates within amino-acid biosynthesis; L-arginine biosynthesis; L-arginine from L-ornithine and carbamoyl phosphate: step 2/3. The protein is Argininosuccinate synthase of Thermoplasma volcanium (strain ATCC 51530 / DSM 4299 / JCM 9571 / NBRC 15438 / GSS1).